The primary structure comprises 233 residues: UPF0173 metal-dependent hydrolase Igni_1254 (233 aa).

Belongs to the UPF0173 family.

This chain is UPF0173 metal-dependent hydrolase Igni_1254, found in Ignicoccus hospitalis (strain KIN4/I / DSM 18386 / JCM 14125).